The chain runs to 742 residues: MSTNPNTPAPPASRTNPISLRIYKAIGTSFDDVSSREALEIASGMYGPEDPKAKVKAQPEYEELEEDDDTLPKRRTLKGQSAAIARKYLKQDIETCLATGSTKFLEAFAEVDQKLNVLREHMQEMQVRCDQVQSELDQANSGTKFLLERADVLRSQRDSAQLRAHLITLFLSRFTLSNSELTALTSREVTIGQPLFDALDHVEKIRTDCEVLLSGEEGKAQAGLDIMSLTSEQLESGYSKIHRYCQFEFRQFTREAQLEASSVMRQAICRLRDRPALLADAIQTLTSTRQSSILHQFLDALTRGGPGGLPRPIEIHAHDPTRYVGDMLAWVHQTTATEHEFLEGMFGVKEKKRWVGQERGGEEGEEERMASEVLDKDLEGLSRPLKLRIQETIKSQEGIIMTYKIANLLHFYLVTMRKTIGGKAMLVQTLQEIHDQAYIAFYETLDAQGRGLLRFLHPPDATLTPPITLRDAAQILRELLFVYSTSLIDPAERESDADLAKLLDKAVGPCVEMCERMAEMRRGKSGGGEWERDIFMVNSLGYLEHTLEMYDFTTKTLHMLDEKIKTHVESMTFEHHGKLLESCGLAAVMRTIRTRPEDTPLSRLHATSPKSLTSALSKFSTWISTVDPSTSPRLALLTSPRLAVEIHRKALRKIYDAYGEICERVLDKAEGYEFGETMLRRGRDEVGVALGVGEDWELEEDTEEKSMKQKEQQDEDTEDQGEKGIMQEEHKAQDAGNTEDKA.

The tract at residues 692 to 742 (VGEDWELEEDTEEKSMKQKEQQDEDTEDQGEKGIMQEEHKAQDAGNTEDKA) is disordered. The segment covering 694-703 (EDWELEEDTE) has biased composition (acidic residues). The span at 720–742 (QGEKGIMQEEHKAQDAGNTEDKA) shows a compositional bias: basic and acidic residues.

The protein belongs to the COG6 family.

The protein resides in the golgi apparatus membrane. In terms of biological role, acts as a component of the peripheral membrane COG complex that is involved in intra-Golgi protein trafficking. COG is located at the cis-Golgi, and regulates tethering of retrograde intra-Golgi vesicles and possibly a number of other membrane trafficking events. This Cryptococcus neoformans var. neoformans serotype D (strain JEC21 / ATCC MYA-565) (Filobasidiella neoformans) protein is Conserved oligomeric Golgi complex subunit 6 (COG6).